An 89-amino-acid polypeptide reads, in one-letter code: Small ribosomal subunit protein bS20 (89 aa).

This sequence belongs to the bacterial ribosomal protein bS20 family.

In terms of biological role, binds directly to 16S ribosomal RNA. This is Small ribosomal subunit protein bS20 from Wolbachia pipientis wMel.